Consider the following 89-residue polypeptide: Probable monothiol glutaredoxin GrlA (89 aa).

Residues 1-89 (MLYMKGTPKM…EPMLRDAVAA (89 aa)) form the Glutaredoxin domain. Lysine 5 is a glutathione binding site. Position 13 (cysteine 13) interacts with [2Fe-2S] cluster. Glutathione is bound by residues arginine 42, phenylalanine 54, and 67–68 (SD).

This sequence belongs to the glutaredoxin family. Monothiol subfamily.

The polypeptide is Probable monothiol glutaredoxin GrlA (grlA) (Legionella pneumophila subsp. pneumophila (strain Philadelphia 1 / ATCC 33152 / DSM 7513)).